A 178-amino-acid chain; its full sequence is Transcription termination/antitermination protein NusG (178 aa).

A KOW domain is found at Ser130 to Val159.

Belongs to the NusG family.

Functionally, participates in transcription elongation, termination and antitermination. The protein is Transcription termination/antitermination protein NusG of Halalkalibacterium halodurans (strain ATCC BAA-125 / DSM 18197 / FERM 7344 / JCM 9153 / C-125) (Bacillus halodurans).